The primary structure comprises 387 residues: Delta(12)-acyl-lipid-desaturase (387 aa).

Residues 1–31 (MGAGGRMTVPNKWEGEGDEKSQKPVQRVPSA) form a disordered region. Over residues 13 to 22 (WEGEGDEKSQ) the composition is skewed to basic and acidic residues. 2 helical membrane-spanning segments follow: residues 58 to 78 (SYVLYDLTLVAIFYYVATTYI) and 88 to 108 (AAWPVYWALQGCVLTGVWVIA). The Histidine box-1 motif lies at 109–113 (HECGH). Residues 121–141 (WVDDCVGLVLHSALLVPYFSW) traverse the membrane as a helical segment. Positions 145–149 (HRRHH) match the Histidine box-2 motif. 3 helical membrane-spanning segments follow: residues 183–203 (VMTLIVTLTLGWPLYLALNVS), 229–249 (IYISDVGIMAATYTLYKIAAA), and 251–271 (GLAWLVCVYGVPLLIVNAFLV). Positions 319 to 323 (HVAHH) match the Histidine box-3 motif.

The protein belongs to the fatty acid desaturase type 1 family.

The protein localises to the membrane. It functions in the pathway lipid metabolism; polyunsaturated fatty acid biosynthesis. In terms of biological role, delta(12)-fatty acid desaturase producing in a heterologous system linoleic acid (18:2(9Z,12Z)) and to a lower extent hexadecadienoic acid (16:2(9Z,12Z)). The polypeptide is Delta(12)-acyl-lipid-desaturase (Punica granatum (Pomegranate)).